We begin with the raw amino-acid sequence, 261 residues long: Ribosomal RNA small subunit methyltransferase A (261 aa).

S-adenosyl-L-methionine contacts are provided by Asn15, Ile17, Gly42, Glu64, Asp90, and Asn109.

It belongs to the class I-like SAM-binding methyltransferase superfamily. rRNA adenine N(6)-methyltransferase family. RsmA subfamily.

Its subcellular location is the cytoplasm. The catalysed reaction is adenosine(1518)/adenosine(1519) in 16S rRNA + 4 S-adenosyl-L-methionine = N(6)-dimethyladenosine(1518)/N(6)-dimethyladenosine(1519) in 16S rRNA + 4 S-adenosyl-L-homocysteine + 4 H(+). Its function is as follows. Specifically dimethylates two adjacent adenosines (A1518 and A1519) in the loop of a conserved hairpin near the 3'-end of 16S rRNA in the 30S particle. May play a critical role in biogenesis of 30S subunits. In Wolbachia sp. subsp. Brugia malayi (strain TRS), this protein is Ribosomal RNA small subunit methyltransferase A.